Here is a 315-residue protein sequence, read N- to C-terminus: Cytochrome f (315 aa).

Residues 1–30 (MRTFLKFSTLVSKGVLVLVCSFFLTASSNA) form the signal peptide. 4 residues coordinate heme: tyrosine 31, cysteine 51, cysteine 54, and histidine 55. A helical membrane pass occupies residues 281–300 (IQGLLVFFLFVLLAQVFLVL).

The protein belongs to the cytochrome f family. The 4 large subunits of the cytochrome b6-f complex are cytochrome b6, subunit IV (17 kDa polypeptide, petD), cytochrome f and the Rieske protein, while the 4 small subunits are PetG, PetL, PetM and PetN. The complex functions as a dimer. The cofactor is heme.

It is found in the plastid. The protein localises to the chloroplast thylakoid membrane. Component of the cytochrome b6-f complex, which mediates electron transfer between photosystem II (PSII) and photosystem I (PSI), cyclic electron flow around PSI, and state transitions. The polypeptide is Cytochrome f (petA) (Chlorella vulgaris (Green alga)).